The chain runs to 66 residues: Large ribosomal subunit protein uL29 (66 aa).

This sequence belongs to the universal ribosomal protein uL29 family.

The polypeptide is Large ribosomal subunit protein uL29 (Methylibium petroleiphilum (strain ATCC BAA-1232 / LMG 22953 / PM1)).